The primary structure comprises 247 residues: MIREQRSSRGGSRDQRTNRRIRAREVRVVGSDGSQLGVMPLEAALDRARTEGLDLVEISPMASPPVCKIMDYGKFKYEEKKKASEAKRAQVTVLLKEVKLRPKTEEHDYEFKVRNTRRFIEDGNKAKVVIQFRGREITHREQGTAILDDVAKDLKDVAVVEQMPRMEGRLMFMILAPTPKVAQKARELVRQAATAAKRPPPPGAPGAGKSAAGASSGAEEKAEETAEEKKEAQAAPAAAEAQSPTAS.

Disordered stretches follow at residues 1–20 (MIRE…TNRR) and 188–247 (LVRQ…PTAS). A needed for vegetative and developmental functions, but not for viability region spans residues 182–247 (AQKARELVRQ…AAEAQSPTAS (66 aa)). Positions 207 to 217 (AGKSAAGASSG) are enriched in low complexity. The span at 218-232 (AEEKAEETAEEKKEA) shows a compositional bias: basic and acidic residues. Residues 233-247 (QAAPAAAEAQSPTAS) are compositionally biased toward low complexity.

This sequence belongs to the IF-3 family. Monomer.

Its subcellular location is the cytoplasm. Its function is as follows. IF-3 binds to the 30S ribosomal subunit and shifts the equilibrium between 70S ribosomes and their 50S and 30S subunits in favor of the free subunits, thus enhancing the availability of 30S subunits on which protein synthesis initiation begins. In Myxococcus xanthus, this protein is Translation initiation factor IF-3.